A 164-amino-acid polypeptide reads, in one-letter code: Protein DOWNSTREAM OF FLC (164 aa).

An N-terminal signal peptide occupies residues 1–23 (MAKSFVPLIAVLCVLVLPLAAMA). 3 cysteine pairs are disulfide-bonded: C36-C107, C39-C148, and C60-C95.

This sequence belongs to the Ole e I family.

It is found in the secreted. Its function is as follows. Part of a three-gene cluster containing FLC, UFC and DFC, which is coordinately regulated in response to vernalization. Not regulated by FLX. In Arabidopsis thaliana (Mouse-ear cress), this protein is Protein DOWNSTREAM OF FLC (DFC).